Consider the following 211-residue polypeptide: Probable nicotinate-nucleotide adenylyltransferase (211 aa).

Belongs to the NadD family.

The enzyme catalyses nicotinate beta-D-ribonucleotide + ATP + H(+) = deamido-NAD(+) + diphosphate. The protein operates within cofactor biosynthesis; NAD(+) biosynthesis; deamido-NAD(+) from nicotinate D-ribonucleotide: step 1/1. Its function is as follows. Catalyzes the reversible adenylation of nicotinate mononucleotide (NaMN) to nicotinic acid adenine dinucleotide (NaAD). This Lactiplantibacillus plantarum (strain ATCC BAA-793 / NCIMB 8826 / WCFS1) (Lactobacillus plantarum) protein is Probable nicotinate-nucleotide adenylyltransferase.